The following is a 155-amino-acid chain: Lectin-like protein EP153R (155 aa).

Topologically, residues 1–30 (MYFKKKYIGLIDKNCEKKILDDCTTIKICY) are cytoplasmic. Residues 31–51 (ILIGILIGTNMITLIYNFIFW) traverse the membrane as a helical segment. At 52 to 155 (DHYMTCNKKD…YLPLLFICSK (104 aa)) the chain is on the extracellular side. Cysteine 66 and cysteine 77 are disulfide-bonded. A lectin-like region spans residues 66–154 (CPKDWVGYNN…KYLPLLFICS (89 aa)). Residues asparagine 82, asparagine 86, asparagine 98, asparagine 104, asparagine 110, asparagine 124, asparagine 130, and asparagine 137 are each glycosylated (N-linked (GlcNAc...) asparagine; by host). Residues cysteine 94 and cysteine 153 are joined by a disulfide bond.

It belongs to the asfivirus lectin-like protein family. As to quaternary structure, homodimer.

Its subcellular location is the host endoplasmic reticulum membrane. In terms of biological role, down-regulates MHC-I expression by impairing the appropriate configuration or presentation into the plasma membrane of the latter. Participates in viral hemadsorption, which may help viral spread. Reduces the transactivating activity of host TP53, thus inhibiting apoptosis. Non-essential for virus growth in swine macrophage cell cultures. In Ornithodoros (relapsing fever ticks), this protein is Lectin-like protein EP153R.